A 1015-amino-acid chain; its full sequence is Beta-galactosidase (1015 aa).

Residue Glu434 is the Proton donor of the active site. The active-site Nucleophile is Glu513.

It belongs to the glycosyl hydrolase 2 family. Mg(2+) serves as cofactor. Requires Mn(2+) as cofactor.

It carries out the reaction Hydrolysis of terminal non-reducing beta-D-galactose residues in beta-D-galactosides.. The protein is Beta-galactosidase (lacZ) of Arthrobacter sp. (strain B7).